The chain runs to 167 residues: Protein-export protein SecB (167 aa).

It belongs to the SecB family. Homotetramer, a dimer of dimers. One homotetramer interacts with 1 SecA dimer.

The protein resides in the cytoplasm. One of the proteins required for the normal export of preproteins out of the cell cytoplasm. It is a molecular chaperone that binds to a subset of precursor proteins, maintaining them in a translocation-competent state. It also specifically binds to its receptor SecA. This chain is Protein-export protein SecB, found in Cellvibrio japonicus (strain Ueda107) (Pseudomonas fluorescens subsp. cellulosa).